We begin with the raw amino-acid sequence, 346 residues long: L-malyl-CoA/beta-methylmalyl-CoA lyase (346 aa).

Residues glutamate 148 and aspartate 177 each coordinate Mg(2+). Substrate contacts are provided by residues 176–177 and 253–254; these read VD and LH.

It belongs to the HpcH/HpaI aldolase family. Mg(2+) is required as a cofactor. Requires Mn(2+) as cofactor.

The catalysed reaction is (S)-malyl-CoA = glyoxylate + acetyl-CoA. The enzyme catalyses (2R,3S)-beta-methylmalyl-CoA = propanoyl-CoA + glyoxylate. In terms of biological role, involved in the methylaspartate cycle. Catalyzes the reversible cleavage of beta-methylmalyl-CoA to propionyl-CoA and glyoxylate, as well as the reversible cleavage of (S)-malyl-CoA to acetyl-CoA and glyoxylate. In addition, it has a small malyl-CoA thioesterase activity. It can also catalyze the cleavage of (S)-citramalyl-CoA to acetyl-CoA and pyruvate. This chain is L-malyl-CoA/beta-methylmalyl-CoA lyase (citE1), found in Haloarcula marismortui (strain ATCC 43049 / DSM 3752 / JCM 8966 / VKM B-1809) (Halobacterium marismortui).